The chain runs to 135 residues: Sex-regulated protein janus-A (135 aa).

K37 contacts substrate. Catalysis depends on H63, which acts as the Proton acceptor. Residue 104–106 (SQG) coordinates substrate.

The protein belongs to the janus family.

Its function is as follows. JanA and janB regulate somatic sex differentiation. This is Sex-regulated protein janus-A (janA) from Drosophila orena (Fruit fly).